The primary structure comprises 698 residues: 4-hydroxybutyrate--CoA ligase [ADP-forming] (698 aa).

Residues 491–544 (QEVLKAYGLPLPKSTLAKNEAEAVKAAKKIGYPVVMKIASPQIIHKSDAGGVKV) form the ATP-grasp domain. 517–544 (AKKIGYPVVMKIASPQIIHKSDAGGVKV) serves as a coordination point for ATP.

In the N-terminal section; belongs to the acetate CoA ligase alpha subunit family. It in the C-terminal section; belongs to the acetate CoA ligase beta subunit family. Mg(2+) is required as a cofactor. The cofactor is Mn(2+).

It catalyses the reaction 4-hydroxybutanoate + ATP + CoA = 4-hydroxybutanoyl-CoA + ADP + phosphate. In terms of biological role, involved in thaumarchaeal hydroxypropionate/hydroxybutyrate (HP/HB) cycle, a modified version of the autotrophic HP/HB cycle of Crenarchaeota. Catalyzes the formation of 4-hydroxybutyryl-CoA, ADP and phosphate from 4-hydroxybutyrate, coenzyme A (CoA) and ATP. Can also use acetate, propionate and butyrate, with poor catalytic efficiency. The polypeptide is 4-hydroxybutyrate--CoA ligase [ADP-forming] (Nitrosopumilus maritimus (strain SCM1)).